The chain runs to 255 residues: Putative Myb family transcription factor At1g14600 (255 aa).

One can recognise an HTH myb-type domain in the interval 20-80; sequence RSPVPRLRWT…HLQMYRGSRI (61 aa). Residues 51–76 constitute a DNA-binding region (H-T-H motif); that stretch reads PKLVLKIMDVKGLTISHVKSHLQMYR. Positions 80–110 are disordered; the sequence is ITLLGKPEESSSPSSRRRRRQDNEEDHLHDN.

It is found in the nucleus. Functionally, putative transcription factor. The sequence is that of Putative Myb family transcription factor At1g14600 from Arabidopsis thaliana (Mouse-ear cress).